The primary structure comprises 623 residues: Aspartate--tRNA(Asp/Asn) ligase (623 aa).

E175 contributes to the L-aspartate binding site. The tract at residues 199-202 is aspartate; sequence QQFK. R221 and H455 together coordinate L-aspartate. ATP is bound at residue 221-223; the sequence is RDE. E517 is an ATP binding site. Position 524 (R524) interacts with L-aspartate. 569–572 is a binding site for ATP; sequence GVDR.

This sequence belongs to the class-II aminoacyl-tRNA synthetase family. Type 1 subfamily. In terms of assembly, homodimer.

The protein localises to the cytoplasm. The enzyme catalyses tRNA(Asx) + L-aspartate + ATP = L-aspartyl-tRNA(Asx) + AMP + diphosphate. In terms of biological role, aspartyl-tRNA synthetase with relaxed tRNA specificity since it is able to aspartylate not only its cognate tRNA(Asp) but also tRNA(Asn). Reaction proceeds in two steps: L-aspartate is first activated by ATP to form Asp-AMP and then transferred to the acceptor end of tRNA(Asp/Asn). The protein is Aspartate--tRNA(Asp/Asn) ligase of Methylocella silvestris (strain DSM 15510 / CIP 108128 / LMG 27833 / NCIMB 13906 / BL2).